A 365-amino-acid chain; its full sequence is uncharacterized protein (365 aa).

Residue 29-36 (GPLNSGKS) coordinates ATP.

It belongs to the archaeal ATPase family.

This is an uncharacterized protein from Methanocaldococcus jannaschii (strain ATCC 43067 / DSM 2661 / JAL-1 / JCM 10045 / NBRC 100440) (Methanococcus jannaschii).